Here is a 431-residue protein sequence, read N- to C-terminus: Protein farnesyltransferase subunit beta (431 aa).

5 PFTB repeats span residues 130–171 (KRKI…SLCD), 182–224 (RKGI…TLLN), 231–273 (TEGV…AILR), 280–322 (VEKL…AILE), and 332–375 (KHAL…AVAE). (2E,6E)-farnesyl diphosphate contacts are provided by residues 258 to 261 (HGGY) and 301 to 304 (RSNK). Positions 307 and 309 each coordinate Zn(2+). 310–313 (YSFW) contributes to the (2E,6E)-farnesyl diphosphate binding site. Residue His-363 participates in Zn(2+) binding.

It belongs to the protein prenyltransferase subunit beta family. Heterodimer of an alpha (RAM2) and a beta (RAM1) subunit. It depends on Zn(2+) as a cofactor.

The protein localises to the cytoplasm. The enzyme catalyses L-cysteinyl-[protein] + (2E,6E)-farnesyl diphosphate = S-(2E,6E)-farnesyl-L-cysteinyl-[protein] + diphosphate. Catalyzes the transfer of a farnesyl moiety from farnesyl diphosphate to a cysteine at the fourth position from the C-terminus of several proteins having the C-terminal sequence Cys-aliphatic-aliphatic-X where X is Ser, Ala, Met, Cys, or Gln. Required for the membrane localization of proteins such as a-factor, Ras proteins and other membrane proteins containing the C-terminal CAAX motif. The beta subunit is responsible for isoprenoid and peptide-binding. The polypeptide is Protein farnesyltransferase subunit beta (Saccharomyces cerevisiae (strain ATCC 204508 / S288c) (Baker's yeast)).